The following is a 122-amino-acid chain: UPF0231 protein VF_2154 (122 aa).

Belongs to the UPF0231 family.

This is UPF0231 protein VF_2154 from Aliivibrio fischeri (strain ATCC 700601 / ES114) (Vibrio fischeri).